A 307-amino-acid chain; its full sequence is MGKIRVRNNNAASDAEVRNTVFKFNKDFGQHILKNPLVAQGIVDKADLKQSDTVLEVGPGTGNLTVRMLEKARKVIAVEMDPRMAAEITKRVQGTPKEKKLQVVLGDVIKTDLPYFDVCVSNTPYQISSPLVFKLLQQRPAPRAAILMFQREFALRLVARPGDPLYCRLSANVQMWAHVKHIMKVGKNNFRPPPLVESSVVRIEPKNPPPPLAFEEWDGLLRIVFLRKNKTIGACFKTSSIIEMVENNYRTWCSQNERMVEEDFDVKSLIDGVLQQCNLQDARASKCGQTEFLSLLHAFHQVGVHFA.

Residues His31, Leu33, Gly58, Glu79, Asp107, and Asn122 each coordinate S-adenosyl-L-methionine.

This sequence belongs to the class I-like SAM-binding methyltransferase superfamily. rRNA adenine N(6)-methyltransferase family.

It catalyses the reaction adenosine(1779)/adenosine(1780) in 18S rRNA + 4 S-adenosyl-L-methionine = N(6)-dimethyladenosine(1779)/N(6)-dimethyladenosine(1780) in 18S rRNA + 4 S-adenosyl-L-homocysteine + 4 H(+). Its function is as follows. Specifically dimethylates two adjacent adenosines in the loop of a conserved hairpin near the 3'-end of 18S rRNA in the 40S particle. This Schizosaccharomyces pombe (strain 972 / ATCC 24843) (Fission yeast) protein is Dimethyladenosine transferase (dim1).